We begin with the raw amino-acid sequence, 373 residues long: MSANDRRDRRVRVAVVFGGRSNEHAISCVSAGSILRNLDSRRFDVIAVGITPAGSWVLTDANPDALTITNRELPQVKSGSGTELALPADPRRGGQLVSLPPGAGEVLESVDVVFPVLHGPYGEDGTIQGLLELAGVPYVGAGVLASAVGMDKEFTKKLLAADGLPVGAYAVLRPPRSTLHRQECERLGLPVFVKPARGGSSIGVSRVSSWDQLPAAVARARRHDPKVIVEAAISGRELECGVLEMPDGTLEASTLGEIRVAGVRGREDSFYDFATKYLDDAAELDVPAKVDDQVAEAIRQLAIRAFAAIDCRGLARVDFFLTDDGPVINEINTMPGFTTISMYPRMWAASGVDYPTLLATMIETALARGVGLH.

One can recognise an ATP-grasp domain in the interval 156–363 (KKLLAADGLP…YPTLLATMIE (208 aa)). Residue 184–239 (CERLGLPVFVKPARGGSSIGVSRVSSWDQLPAAVARARRHDPKVIVEAAISGRELE) participates in ATP binding. 3 residues coordinate Mg(2+): aspartate 318, glutamate 330, and asparagine 332.

The protein belongs to the D-alanine--D-alanine ligase family. Mg(2+) is required as a cofactor. It depends on Mn(2+) as a cofactor.

The protein resides in the cytoplasm. The catalysed reaction is 2 D-alanine + ATP = D-alanyl-D-alanine + ADP + phosphate + H(+). It participates in cell wall biogenesis; peptidoglycan biosynthesis. Its function is as follows. Cell wall formation. This is D-alanine--D-alanine ligase from Mycobacterium bovis (strain BCG / Pasteur 1173P2).